Consider the following 505-residue polypeptide: Histidine ammonia-lyase (505 aa).

Positions 141 to 143 form a cross-link, 5-imidazolinone (Ala-Gly); that stretch reads ASG. S142 bears the 2,3-didehydroalanine (Ser) mark.

The protein belongs to the PAL/histidase family. Contains an active site 4-methylidene-imidazol-5-one (MIO), which is formed autocatalytically by cyclization and dehydration of residues Ala-Ser-Gly.

The protein localises to the cytoplasm. It carries out the reaction L-histidine = trans-urocanate + NH4(+). It participates in amino-acid degradation; L-histidine degradation into L-glutamate; N-formimidoyl-L-glutamate from L-histidine: step 1/3. The sequence is that of Histidine ammonia-lyase from Bacillus cereus (strain ZK / E33L).